The chain runs to 556 residues: 2-succinyl-5-enolpyruvyl-6-hydroxy-3-cyclohexene-1-carboxylate synthase (556 aa).

The protein belongs to the TPP enzyme family. MenD subfamily. As to quaternary structure, homodimer. The cofactor is Mg(2+). Mn(2+) is required as a cofactor. Requires thiamine diphosphate as cofactor.

It catalyses the reaction isochorismate + 2-oxoglutarate + H(+) = 5-enolpyruvoyl-6-hydroxy-2-succinyl-cyclohex-3-ene-1-carboxylate + CO2. The protein operates within quinol/quinone metabolism; 1,4-dihydroxy-2-naphthoate biosynthesis; 1,4-dihydroxy-2-naphthoate from chorismate: step 2/7. It participates in quinol/quinone metabolism; menaquinone biosynthesis. Functionally, catalyzes the thiamine diphosphate-dependent decarboxylation of 2-oxoglutarate and the subsequent addition of the resulting succinic semialdehyde-thiamine pyrophosphate anion to isochorismate to yield 2-succinyl-5-enolpyruvyl-6-hydroxy-3-cyclohexene-1-carboxylate (SEPHCHC). This chain is 2-succinyl-5-enolpyruvyl-6-hydroxy-3-cyclohexene-1-carboxylate synthase, found in Saccharopolyspora erythraea (strain ATCC 11635 / DSM 40517 / JCM 4748 / NBRC 13426 / NCIMB 8594 / NRRL 2338).